The chain runs to 1024 residues: Probable alpha-mannosidase At5g13980 (1024 aa).

A signal peptide spans 1–21 (MDLAKFLCWIVLLLGISLVES). A glycan (N-linked (GlcNAc...) asparagine) is linked at N27. The Zn(2+) site is built by H46 and D48. N63 carries an N-linked (GlcNAc...) asparagine glycan. D168 is a binding site for Zn(2+). Residue N278 is glycosylated (N-linked (GlcNAc...) asparagine). H410 contacts Zn(2+). Residues C461 and C469 are joined by a disulfide bond. N-linked (GlcNAc...) asparagine glycans are attached at residues N465, N475, N637, N658, N733, and N823. C827 and C832 are oxidised to a cystine.

The protein belongs to the glycosyl hydrolase 38 family. In terms of assembly, homodimer. Requires Zn(2+) as cofactor.

It catalyses the reaction Hydrolysis of terminal, non-reducing alpha-D-mannose residues in alpha-D-mannosides.. In terms of biological role, liberates mannose from p-nitrophenyl-alpha-D-mannoside in vitro. The sequence is that of Probable alpha-mannosidase At5g13980 from Arabidopsis thaliana (Mouse-ear cress).